The chain runs to 160 residues: Transcription antitermination protein NusB (160 aa).

It belongs to the NusB family.

Functionally, involved in transcription antitermination. Required for transcription of ribosomal RNA (rRNA) genes. Binds specifically to the boxA antiterminator sequence of the ribosomal RNA (rrn) operons. This Maricaulis maris (strain MCS10) (Caulobacter maris) protein is Transcription antitermination protein NusB.